The following is a 147-amino-acid chain: Sec-independent protein translocase protein TatB (147 aa).

Residues 1–21 (MFDVSFTELMVIGVIALVVIG) traverse the membrane as a helical segment. Positions 67 to 147 (DETARSMQTS…DKTPPTGSAT (81 aa)) are disordered. The segment covering 93 to 103 (AELDDTARDAS) has biased composition (basic and acidic residues). Low complexity-rich tracts occupy residues 109–120 (ADAPAEPAPAVA) and 129–147 (APPAAATPADKTPPTGSAT).

This sequence belongs to the TatB family. As to quaternary structure, the Tat system comprises two distinct complexes: a TatABC complex, containing multiple copies of TatA, TatB and TatC subunits, and a separate TatA complex, containing only TatA subunits. Substrates initially bind to the TatABC complex, which probably triggers association of the separate TatA complex to form the active translocon.

Its subcellular location is the cell inner membrane. Functionally, part of the twin-arginine translocation (Tat) system that transports large folded proteins containing a characteristic twin-arginine motif in their signal peptide across membranes. Together with TatC, TatB is part of a receptor directly interacting with Tat signal peptides. TatB may form an oligomeric binding site that transiently accommodates folded Tat precursor proteins before their translocation. In Bordetella pertussis (strain Tohama I / ATCC BAA-589 / NCTC 13251), this protein is Sec-independent protein translocase protein TatB.